A 179-amino-acid polypeptide reads, in one-letter code: Replication restart protein DnaT (179 aa).

The segment at 155–179 is disordered; the sequence is NGGLPKRDVNTVSEPDSQIPPGFRG.

Belongs to the DnaT family. Homooligomerizes. Interacts with PriB. Component of the replication restart primosome. Primosome assembly occurs via a 'hand-off' mechanism. PriA binds to replication forks, subsequently PriB then DnaT bind; DnaT then displaces ssDNA to generate the helicase loading substrate.

Its function is as follows. Involved in the restart of stalled replication forks, which reloads the replicative helicase on sites other than the origin of replication. Can function in multiple replication restart pathways. Displaces ssDNA from a PriB-ssDNA complex. Probably forms a spiral filament on ssDNA. In Escherichia coli O8 (strain IAI1), this protein is Replication restart protein DnaT.